The primary structure comprises 350 residues: Methionine import ATP-binding protein MetN (350 aa).

Residues 2–241 (IQIKNLKKEY…PQAPVTRSFV (240 aa)) form the ABC transporter domain. 38-45 (GHSGAGKS) contributes to the ATP binding site.

It belongs to the ABC transporter superfamily. Methionine importer (TC 3.A.1.24) family. As to quaternary structure, the complex is composed of two ATP-binding proteins (MetN), two transmembrane proteins (MetI) and a solute-binding protein (MetQ).

It is found in the cell inner membrane. It carries out the reaction L-methionine(out) + ATP + H2O = L-methionine(in) + ADP + phosphate + H(+). The catalysed reaction is D-methionine(out) + ATP + H2O = D-methionine(in) + ADP + phosphate + H(+). Part of the ABC transporter complex MetNIQ involved in methionine import. Responsible for energy coupling to the transport system. The chain is Methionine import ATP-binding protein MetN from Francisella tularensis subsp. tularensis (strain FSC 198).